Consider the following 343-residue polypeptide: Calcium/calmodulin-dependent protein kinase type 1B (343 aa).

Positions 15-270 constitute a Protein kinase domain; sequence YEIREKLGSG…CQQALQHLWI (256 aa). ATP contacts are provided by residues 21 to 29 and K44; that span reads LGSGAFSEV. The active-site Proton acceptor is D136. Positions 290–311 are calmodulin-binding; sequence KNFARTHWKRAFNATSFLRHIR. A disordered region spans residues 314–343; it reads GQSPEGEEASRQGMTRHSHPGLGTSQSPKW. S338 bears the Phosphoserine mark.

Belongs to the protein kinase superfamily. CAMK Ser/Thr protein kinase family. CaMK subfamily. Post-translationally, isoform 1 and isoform 2 are phosphorylated by CAMKK1. In terms of tissue distribution, isoform 1 is expressed in liver, heart, lung, kidney, spleen and testis. Isoform 2 is predominantly expressed in cerebrum and cerebellum.

It is found in the cytoplasm. The protein resides in the nucleus. It catalyses the reaction L-seryl-[protein] + ATP = O-phospho-L-seryl-[protein] + ADP + H(+). The catalysed reaction is L-threonyl-[protein] + ATP = O-phospho-L-threonyl-[protein] + ADP + H(+). Its activity is regulated as follows. Activated by Ca(2+)/calmodulin. Must be phosphorylated to be maximally active. Activated by CAMKK1. In terms of biological role, calcium/calmodulin-dependent protein kinase belonging to a proposed calcium-triggered signaling cascade. In vitro, isoform 1 and isoform 2 phosphorylate CREB1, SYN1/synapsin I. Phosphorylates and activates CAMK1. In Rattus norvegicus (Rat), this protein is Calcium/calmodulin-dependent protein kinase type 1B (Pnck).